Consider the following 417-residue polypeptide: Voltage-gated potassium channel Kch (417 aa).

The Cytoplasmic portion of the chain corresponds to 1-21 (MSHWATFKQTATNLWVTLRHD). The chain crosses the membrane as a helical span at residues 22–41 (ILALAVFLNGLLIFKTIYGM). Over 42–63 (SVNLLDIFHIKAFSELDLSLLA) the chain is Periplasmic. Residues 64–83 (NAPLFMLGVFLVLNSIGLLF) traverse the membrane as a helical segment. The Cytoplasmic segment spans residues 84-86 (RAK). A helical transmembrane segment spans residues 87–104 (LAWAISIILLLIALIYTL). At 105 to 110 (HFYPWL) the chain is on the periplasmic side. The chain crosses the membrane as a helical span at residues 111–127 (KFSIGFCIFTLVFLLIL). Residues 128–140 (RKDFSHSSAAAGT) lie on the Cytoplasmic side of the membrane. A helical transmembrane segment spans residues 141–160 (IFAFISFTTLLFYSTYGALY). At 161-199 (LSEGFNPRIESLMTAFYFSIETMSTVGYGDIVPVSESAR) the chain is on the periplasmic side. The Selectivity filter signature appears at 185-190 (TVGYGD). The helical transmembrane segment at 200–220 (LFTISVIISGITVFATSMTSI) threads the bilayer. Over 221 to 417 (FGPLIRGGFN…KADSKESAQK (197 aa)) the chain is Cytoplasmic. The RCK N-terminal domain occupies 243 to 363 (KDHFIVCGHS…IKMVHPDIIL (121 aa)).

It belongs to the potassium channel family. As to quaternary structure, dimer.

It is found in the cell inner membrane. Functionally, k(+)-specific ion channel. May play a role in the defense against osmotic shock. The polypeptide is Voltage-gated potassium channel Kch (kch) (Escherichia coli (strain K12)).